The sequence spans 658 residues: Palmitoyltransferase ZDHHC5-B (658 aa).

Over 1–24 (MPVGLSVGGALGDPSPSRPFRPSR) the chain is Cytoplasmic. Residues 25-45 (YVPVSAATAFLVGATTLFLCF) traverse the membrane as a helical segment. Residues 46 to 56 (TCPWLSEKFSS) lie on the Extracellular side of the membrane. A helical transmembrane segment spans residues 57 to 77 (FIPLYNVVVFLFTLANFCMAT). Residues 78–159 (FMDPGVFPRA…NCIGRRNYRY (82 aa)) lie on the Cytoplasmic side of the membrane. The 51-residue stretch at 115–165 (KWCSTCRFYRPPRCSHCSVCDNCVEEFDHHCPWVNNCIGRRNYRYFFLFLL) folds into the DHHC domain. Residue cysteine 145 is the S-palmitoyl cysteine intermediate of the active site. A helical membrane pass occupies residues 160 to 180 (FFLFLLSLTVHIMDVFGFSLL). The Extracellular segment spans residues 181–202 (YILHHTKQLDLVQSGVTMAVMC). Residues 203 to 223 (VAGLFFVPVAGLTGFHVVLVA) form a helical membrane-spanning segment. Over 224-658 (RGRTTNEQVT…VGGTTYEISV (435 aa)) the chain is Cytoplasmic. Disordered stretches follow at residues 306-419 (EIME…RSGS), 490-522 (ESLLTPSESPEFESAAHELSPPRPHPPHSLSTA), and 540-658 (QREG…EISV). Polar residues predominate over residues 360–398 (PGKNHTASTHSSKMSRGNSMTESPSVPVTTGQPSYRSDP). The span at 407–419 (GCRGGAEGGRSGS) shows a compositional bias: gly residues. Pro residues predominate over residues 565–575 (SSPPSRAPPLS). Positions 619 to 633 (SMPNSTIKQNVANHN) are enriched in polar residues. Positions 634 to 644 (THSHKPARGVK) are enriched in basic residues.

It belongs to the DHHC palmitoyltransferase family. ERF2/ZDHHC9 subfamily.

The protein localises to the cell membrane. It catalyses the reaction L-cysteinyl-[protein] + hexadecanoyl-CoA = S-hexadecanoyl-L-cysteinyl-[protein] + CoA. Its function is as follows. Palmitoyltransferase that catalyzes the addition of palmitate onto various protein substrates and is involved in a variety of cellular processes. In Danio rerio (Zebrafish), this protein is Palmitoyltransferase ZDHHC5-B.